We begin with the raw amino-acid sequence, 804 residues long: SH3-containing GRB2-like protein 3-interacting protein 1 (804 aa).

Disordered regions lie at residues 1–90, 124–181, and 199–254; these read MMEG…EESH, LSPS…GPPL, and IWGS…QSAT. Basic and acidic residues predominate over residues 16-34; it reads RKKEKDTDSTGSPDRDGIK. Phosphoserine occurs at positions 54, 80, 81, 83, 125, 127, 132, and 145. Phosphothreonine occurs at positions 156 and 158. Ser-212 is subject to Phosphoserine. The segment covering 221 to 236 has biased composition (pro residues); that stretch reads TGTPPPLPPKNVPATP. Residues Thr-223 and Thr-235 each carry the phosphothreonine modification. Residues Ser-241, Ser-263, Ser-276, Ser-292, and Ser-295 each carry the phosphoserine modification. The segment covering 289–309 has biased composition (basic and acidic residues); that stretch reads VHFSDTSPEHVTPELTPREKV. Residues 289-500 form a disordered region; it reads VHFSDTSPEH…LSAATTPTVE (212 aa). Phosphothreonine occurs at positions 300 and 304. Positions 322–346 are enriched in pro residues; it reads SPAPGPLGPPGPTGPPGPPGPPRNV. Ser-348 is modified (phosphoserine). Basic and acidic residues predominate over residues 354–369; that stretch reads EVQKKVAEQTFIKDDY. Ser-375 bears the Phosphoserine mark. A Phosphothreonine modification is found at Thr-386. The span at 413–432 shows a compositional bias: low complexity; the sequence is TSGASSPARPATPLLPCSST. A compositionally biased stretch (pro residues) spans 433–451; the sequence is TPPPPPPRPPSRPKLPPGK. Low complexity-rich tracts occupy residues 458 to 468 and 475 to 498; these read SRPFSPPIHSS and PLARAESTSSISSTNSLSAATTPT. A Phosphoserine modification is found at Ser-462. The MHD domain maps to 535–803; it reads TLPVAAAFTE…RFAAGKYLAD (269 aa). 4 interaction with DPF motifs-containing proteins regions span residues 537-543, 569-571, 643-646, and 789-794; these read PVAAAFT, SFP, TYYN, and SLIKKR. Residues 625–804 are necessary and sufficient to mediate interaction with CANX; that stretch reads MPNLMTHLKK…FAAGKYLADN (180 aa).

As to quaternary structure, interacts with proteins essential or regulating the formation of functional clathrin-coated pits. Interacts with CANX. Interacts with AP2A1. Interacts with EPS15. Interacts with SH3GL3. Interacts with AMPH. Interacts with ITSN1 (via SH3 domains). Interacts with and REPS1.

It localises to the membrane. It is found in the clathrin-coated pit. Its function is as follows. May function in clathrin-mediated endocytosis. Has both a membrane binding/tubulating activity and the ability to recruit proteins essential to the formation of functional clathrin-coated pits. Has a preference for membranes enriched in phosphatidylserine and phosphoinositides and is required for the endocytosis of the transferrin receptor. May also bind tubulin. May play a role in the regulation of energy homeostasis. The protein is SH3-containing GRB2-like protein 3-interacting protein 1 (SGIP1) of Pongo abelii (Sumatran orangutan).